We begin with the raw amino-acid sequence, 500 residues long: L-arabinose isomerase (500 aa).

E306, E333, H350, and H450 together coordinate Mn(2+).

It belongs to the arabinose isomerase family. In terms of assembly, homohexamer. The cofactor is Mn(2+).

It catalyses the reaction beta-L-arabinopyranose = L-ribulose. It participates in carbohydrate degradation; L-arabinose degradation via L-ribulose; D-xylulose 5-phosphate from L-arabinose (bacterial route): step 1/3. Catalyzes the conversion of L-arabinose to L-ribulose. This chain is L-arabinose isomerase, found in Escherichia coli (strain 55989 / EAEC).